Here is an 857-residue protein sequence, read N- to C-terminus: MPQKTSETPMMQQYNEIKAQYPDAFLFYRIGDFYELFNDDAIKGAQLLELTLTARNKSADDPIPMAGVPHHAVQSYVDILIDHGYKVAICEQMEDPKKAVGMVKRAVIQLVTPGTNVDIKAGAAKSNNYITAVMPHAAGYAFAYADVSTGELKVTDLKSKFALQNELSALATKEIVVPEELTDDDAGMLKQGERLLSVQPDAEPTSEGSYVSQELTDPAEAAVVQMLMAYLLNTQKRSLAHIQKAVAYQPSAYLEMDQDARSNLDILQNSRTGRKGDTLLSLLDSTKTAMGGRLLKQWLDRPLLDIDAISVRQNQVQDLLDHFFERSELQERLTKVYDLERLAGRVAFGTVNGRDLIQLQTSLDQIPAIQDVLGKLDDGSFKALRSKMDPVSDVAGLIRRAIEPEPPISVTDGGLILRGYNQKLDSYRDAMKNSKQWIAELEASERKATGIHTLKIRYNKVFGYFIEVTKSNLDKIPEGRYERKQTLTNAERFITPELKEKETLILEAQESSTALEYDLFQDIRDKVKAQIKRLQALAAQISSLDVLQSFATVAENSHYVRPTMHAGTHDINVKGGRHPVVEHVLGRDSYIPNDVIMNHDTDMLLITGPNMSGKSTYMRQLALIVIMAQAGSFVPADVADLPIFDQIFTRIGAADDLANGESTFMVEMLEANAALSHATASSLILFDEIGRGTATYDGMALAQAIIEFLHDHVHAKTLFSTHYHELTSLSDSLAKLKNVHVGAVEEHGNLVFLHKMMPGPADKSYGIHVAKLAGLPADLLARADTILKQLEADAPNKTAPAPAPQVEEQQLSLFEEPKPTPKNSPILTKLAKFDLMAATPMDAMNFIFDLQKHLKKK.

608–615 contributes to the ATP binding site; sequence GPNMSGKS.

It belongs to the DNA mismatch repair MutS family.

Its function is as follows. This protein is involved in the repair of mismatches in DNA. It is possible that it carries out the mismatch recognition step. This protein has a weak ATPase activity. This is DNA mismatch repair protein MutS from Lacticaseibacillus casei (strain BL23) (Lactobacillus casei).